A 593-amino-acid chain; its full sequence is Ribonuclease Y (593 aa).

Residues I6 to F26 form a helical membrane-spanning segment. The KH domain maps to D218–L278. Residues V354–A464 enclose the HD domain.

The protein belongs to the RNase Y family.

It is found in the cell membrane. Endoribonuclease that initiates mRNA decay. This Mycoplasmoides gallisepticum (strain R(low / passage 15 / clone 2)) (Mycoplasma gallisepticum) protein is Ribonuclease Y.